We begin with the raw amino-acid sequence, 179 residues long: MNNSIHATTIFAIRQNGHAAMAGDGQVTLGEQVIMKQTARKVRRLYDGKVLAGFAGSVADAFTLFEKFETKLQEFSGNLERAAVELAQEWRGDKQLRQLEAMLIVMDKNSILVVSGTGEVISPDDDLIAIGSGGNYALSAGRALKRHTEMSAKDIAYASLKVASEICVFTNDNIIVEEL.

The active site involves T8. Na(+) is bound by residues S164, C167, and T170.

Belongs to the peptidase T1B family. HslV subfamily. In terms of assembly, a double ring-shaped homohexamer of HslV is capped on each side by a ring-shaped HslU homohexamer. The assembly of the HslU/HslV complex is dependent on binding of ATP.

It localises to the cytoplasm. The enzyme catalyses ATP-dependent cleavage of peptide bonds with broad specificity.. With respect to regulation, allosterically activated by HslU binding. Protease subunit of a proteasome-like degradation complex believed to be a general protein degrading machinery. In Staphylococcus carnosus (strain TM300), this protein is ATP-dependent protease subunit HslV.